A 105-amino-acid polypeptide reads, in one-letter code: Unclassified hydrophobin D (105 aa).

Positions 1-18 (MKFYIVLLALAAFAMAEA) are cleaved as a signal peptide. Disulfide bonds link Cys-35–Cys-86, Cys-42–Cys-83, and Cys-43–Cys-49.

The protein localises to the secreted. Its subcellular location is the cell wall. Aerial growth, conidiation, and dispersal of filamentous fungi in the environment rely upon a capability of their secreting small amphipathic proteins called hydrophobins (HPBs) with low sequence identity. Class I can self-assemble into an outermost layer of rodlet bundles on aerial cell surfaces, conferring cellular hydrophobicity that supports fungal growth, development and dispersal; whereas Class II form highly ordered films at water-air interfaces through intermolecular interactions but contribute nothing to the rodlet structure. In P.expansum, hydrophobins contribute to germination, tolerance to cold stress and mycotoxins patulin and citrinin production. The polypeptide is Unclassified hydrophobin D (Penicillium expansum (Blue mold rot fungus)).